The sequence spans 131 residues: MHEMSVALAVIDQVEQAAQQAGDVTAVRSVRLQVGELAGVVPDSLSFCFELACAGTVLEGADLVTEEVPGRARCAPCAREWSVGMPPRLSCPECGGARVDLLSGRELQIVSVHWEDGRTHAQTREPISEER.

His-2 serves as a coordination point for Ni(2+). Residues Cys-74, Cys-77, Cys-91, and Cys-94 each coordinate Zn(2+).

It belongs to the HypA/HybF family.

In terms of biological role, involved in the maturation of [NiFe] hydrogenases. Required for nickel insertion into the metal center of the hydrogenase. The protein is Hydrogenase maturation factor HypA of Streptomyces avermitilis (strain ATCC 31267 / DSM 46492 / JCM 5070 / NBRC 14893 / NCIMB 12804 / NRRL 8165 / MA-4680).